Reading from the N-terminus, the 957-residue chain is Glutamyl aminopeptidase (957 aa).

Over 1–18 the chain is Cytoplasmic; sequence MNFAEREGSKRYCIQTKH. The helical; Signal-anchor for type II membrane protein transmembrane segment at 19–39 threads the bilayer; sequence VAILCAVVVGVGLIVGLAVGL. At 40 to 957 the chain is on the extracellular side; the sequence is TRSCDSSGDG…EWFFNLLESG (918 aa). Residues 44–83 form a disordered region; sequence DSSGDGGPGTAPAPSHLPSSTASPSGPPAQDQDICPASED. Asn-98 carries an N-linked (GlcNAc...) asparagine; atypical glycan. Residues Asn-124 and Asn-197 are each glycosylated (N-linked (GlcNAc...) asparagine). Glu-223 serves as a coordination point for substrate. N-linked (GlcNAc...) asparagine glycans are attached at residues Asn-324 and Asn-340. 357–361 serves as a coordination point for substrate; sequence GAMEN. His-393 serves as a coordination point for Zn(2+). Glu-394 serves as the catalytic Proton acceptor. Residues His-397 and Glu-416 each coordinate Zn(2+). N-linked (GlcNAc...) asparagine glycosylation is found at Asn-554, Asn-589, Asn-597, Asn-607, Asn-678, Asn-763, Asn-773, Asn-801, and Asn-828. Position 887 (Arg-887) interacts with substrate.

It belongs to the peptidase M1 family. Homodimer; disulfide-linked. It depends on Zn(2+) as a cofactor. In terms of tissue distribution, expressed in choriocarcinoma cancer cell lines (at protein level). Expressed by epithelial cells of the proximal tubule cells and the glomerulus of the nephron. Also found in a variety of other tissues.

The protein resides in the cell membrane. It catalyses the reaction Release of N-terminal glutamate (and to a lesser extent aspartate) from a peptide.. Its activity is regulated as follows. Substrate specificity is modulated by calcium which enhances the enzymatic activity for cleavage of acidic residues while reducing its activity with basic residues. Inhibited by aminopeptidase inhibitors amastatin and bestatin. In terms of biological role, regulates central hypertension through its calcium-modulated preference to cleave N-terminal acidic residues from peptides such as angiotensin II. The chain is Glutamyl aminopeptidase (ENPEP) from Homo sapiens (Human).